The following is a 599-amino-acid chain: MTTKEKDEFNIGSLQNSPESSTNMSPDVITTPISKWQAFKDSFKPPEQKPLASSSSSTSSLSASSPHHNDVANNYDIEKSLRPDQQGELKRELKNRHVQMIALGGSVGTGLLIGSGGALHQGGPAALLIAWGITGTMVFCIIHSLGELCVAFPVNGAFSTYANMFVDSSWAFAVGWNYAIMWLIVLPLELVAAAMCITYWNDEINPASWVAIFYVLIVVINIFGVKYYGDAEMYLTIFKIIAIVGFIILGVVLVCGGGPTHEFIGNKYWKQDGAFANGFKGVATTFVTASYSMAGSEMVGLASAEVANPQKSLPKAIRQVFWRIFLFYFLSLTFIGLLVPSNSPQLLGASGTSASPFVIAIKNGGIYALPSIFNACILLSVLSVGNSAVYGCSRTIQSLGAQGLGPKIFAYVDRKGRPLGGLVMSAIFGLLCFLSAYHDEATIFNWLLSVAGLATIFSWFNIGLCHVRFRLALRKQGRSLQELTFTALTGVWGSVYSMIFLCVVLVIQFWTALFPLGSKGKANAENFFQNYLGAVVILIFYVGHKLYTRNWKLCVKLEDIDLDSGRRSFDLDLIRAEIEEEKAANKAKPLYKRLWNYWC.

The disordered stretch occupies residues 1-80 (MTTKEKDEFN…VANNYDIEKS (80 aa)). A compositionally biased stretch (polar residues) spans 12 to 25 (GSLQNSPESSTNMS). A compositionally biased stretch (low complexity) spans 51-65 (LASSSSSTSSLSASS). Transmembrane regions (helical) follow at residues 100–120 (MIAL…GALH), 122–142 (GGPA…FCII), 146–166 (GELC…NMFV), 180–200 (IMWL…ITYW), 204–224 (INPA…NIFG), 235–255 (LTIF…VLVC), 320–340 (VFWR…LLVP), 364–384 (GGIY…VLSV), 418–438 (PLGG…SAYH), 443–463 (IFNW…FNIG), 487–507 (ALTG…VLVI), and 527–547 (FFQN…HKLY).

Belongs to the amino acid-polyamine-organocation (APC) superfamily. YAT (TC 2.A.3.10) family.

It is found in the cell membrane. Its function is as follows. Amino-acid permease that is able to transport phenylalanine. In Candida albicans (strain SC5314 / ATCC MYA-2876) (Yeast), this protein is Amino-acid permease GAP3 (HIP1).